Consider the following 210-residue polypeptide: Cilia- and flagella-associated protein 418 (210 aa).

Residues 1-77 (MAKDLDELLD…LINEIFEEPN (77 aa)) are required for interaction with FAM161A. The interval 24–59 (LDLGERPKGGSGGGGTHSGDRNGAQEKDTLRSTETF) is disordered. Over residues 41–59 (SGDRNGAQEKDTLRSTETF) the composition is skewed to basic and acidic residues.

In terms of assembly, interacts (via N-terminus) with FAM161A (via central region); the interaction is direct.

The protein resides in the cytoplasm. Its subcellular location is the photoreceptor inner segment. Its function is as follows. May be involved in photoreceptor outer segment disk morphogenesis. This Rattus norvegicus (Rat) protein is Cilia- and flagella-associated protein 418.